A 380-amino-acid chain; its full sequence is L-prolyl-[peptidyl-carrier protein] dehydrogenase (380 aa).

Glu-243 (proton acceptor) is an active-site residue. FAD contacts are provided by Arg-269 and Gln-280.

The protein belongs to the acyl-CoA dehydrogenase family. FAD serves as cofactor.

The catalysed reaction is L-prolyl-[peptidyl-carrier protein] + 2 oxidized [electron-transfer flavoprotein] + H(+) = (1H-pyrrole-2-carbonyl)-[peptidyl-carrier protein] + 2 reduced [electron-transfer flavoprotein]. Involved in the biosynthesis of pyoluteorin. Catalyzes the desaturation of the L-prolyl-[PltL] to yield 1H-pyrrole-2-carbonyl-[PltL]. The sequence is that of L-prolyl-[peptidyl-carrier protein] dehydrogenase from Pseudomonas fluorescens (strain ATCC BAA-477 / NRRL B-23932 / Pf-5).